The chain runs to 427 residues: UPF0597 protein FN1147 (427 aa).

This sequence belongs to the UPF0597 family.

The chain is UPF0597 protein FN1147 from Fusobacterium nucleatum subsp. nucleatum (strain ATCC 25586 / DSM 15643 / BCRC 10681 / CIP 101130 / JCM 8532 / KCTC 2640 / LMG 13131 / VPI 4355).